The sequence spans 368 residues: MVPWRRSSSSSSAPSSRPARRPARTNARVSPDVSSELSPLAGEEGAGEERWSALVPDLLADILRCVEAGSERWPPRRDVVACASVCRRWRDVAVAVVQPPLESGKITFPSSLKQPGPRDAPMQCFIKRNKKNSTFFLYLGLTQELTDDEKFLLAARRCRRGLHKEYAITINSDGLFHGSQSCVGNLKSNFTGTKFTIRDWQPPYEGAKAFSSRSGRWFGNKHRCPLVSTGDVEVGEVSYKYSLLRPRGPRRMSCSVQCPVLKGTAVDPQDGKRLSNSIPSSLVLNSKVPSWHEHLQCWCLNFHGRVMVASVKNFQLIAPVEPGEPSDKTVVLQFGKIDDDVFTMDYRQPLSAFQAFAICLSNFGTKLA.

Residues 1 to 17 (MVPWRRSSSSSSAPSSR) show a composition bias toward low complexity. Residues 1-44 (MVPWRRSSSSSSAPSSRPARRPARTNARVSPDVSSELSPLAGEE) form a disordered region. Positions 49–104 (ERWSALVPDLLADILRCVEAGSERWPPRRDVVACASVCRRWRDVAVAVVQPPLESG) constitute an F-box domain.

Belongs to the TUB family. As to expression, expressed in stems, leaves, flowers and seeds.

This Oryza sativa subsp. japonica (Rice) protein is Tubby-like F-box protein 2 (TULP2).